Consider the following 359-residue polypeptide: Peptide chain release factor 1 (359 aa).

Gln235 is modified (N5-methylglutamine).

It belongs to the prokaryotic/mitochondrial release factor family. Post-translationally, methylated by PrmC. Methylation increases the termination efficiency of RF1.

It is found in the cytoplasm. Peptide chain release factor 1 directs the termination of translation in response to the peptide chain termination codons UAG and UAA. The polypeptide is Peptide chain release factor 1 (Polynucleobacter necessarius subsp. necessarius (strain STIR1)).